Here is a 243-residue protein sequence, read N- to C-terminus: tRNA pseudouridine synthase A (243 aa).

Residue Asp54 is the Nucleophile of the active site. Position 112 (Tyr112) interacts with substrate.

It belongs to the tRNA pseudouridine synthase TruA family. In terms of assembly, homodimer.

It catalyses the reaction uridine(38/39/40) in tRNA = pseudouridine(38/39/40) in tRNA. Formation of pseudouridine at positions 38, 39 and 40 in the anticodon stem and loop of transfer RNAs. The chain is tRNA pseudouridine synthase A from Aster yellows witches'-broom phytoplasma (strain AYWB).